A 461-amino-acid polypeptide reads, in one-letter code: ATP synthase subunit beta (461 aa).

Glycine 151–threonine 158 contacts ATP.

This sequence belongs to the ATPase alpha/beta chains family. F-type ATPases have 2 components, CF(1) - the catalytic core - and CF(0) - the membrane proton channel. CF(1) has five subunits: alpha(3), beta(3), gamma(1), delta(1), epsilon(1). CF(0) has three main subunits: a(1), b(2) and c(9-12). The alpha and beta chains form an alternating ring which encloses part of the gamma chain. CF(1) is attached to CF(0) by a central stalk formed by the gamma and epsilon chains, while a peripheral stalk is formed by the delta and b chains.

The protein resides in the cell inner membrane. The enzyme catalyses ATP + H2O + 4 H(+)(in) = ADP + phosphate + 5 H(+)(out). Functionally, produces ATP from ADP in the presence of a proton gradient across the membrane. The catalytic sites are hosted primarily by the beta subunits. This chain is ATP synthase subunit beta, found in Idiomarina loihiensis (strain ATCC BAA-735 / DSM 15497 / L2-TR).